Here is a 274-residue protein sequence, read N- to C-terminus: Penicillin-insensitive murein endopeptidase (274 aa).

Residues 1-19 (MNKTAIALLALLASSASLA) form the signal peptide. 3 disulfide bridges follow: Cys-44–Cys-265, Cys-187–Cys-235, and Cys-216–Cys-223. 6 residues coordinate Zn(2+): His-110, His-113, Asp-120, Asp-147, His-150, and His-211. A disordered region spans residues 227 to 274 (PLPPPGDGCGAELQSWFEPPKPGTTKPEKKTPPPLPPSCQALLDEHVI).

The protein belongs to the peptidase M74 family. Dimer. It depends on Zn(2+) as a cofactor.

It localises to the periplasm. Its function is as follows. Murein endopeptidase that cleaves the D-alanyl-meso-2,6-diamino-pimelyl amide bond that connects peptidoglycan strands. Likely plays a role in the removal of murein from the sacculus. This Escherichia coli O6:K15:H31 (strain 536 / UPEC) protein is Penicillin-insensitive murein endopeptidase.